Reading from the N-terminus, the 85-residue chain is Serine protease inhibitor Cvsi-2 (85 aa).

Positions 1–18 (MKVAVVVALLCFVCYTAA) are cleaved as a signal peptide.

Post-translationally, contains 6 disulfide bonds. As to expression, detected in hemolymph (at protein level). Within the digestive gland expression is limited to the basophil cells of the digestive diverticula.

Its subcellular location is the secreted. Slow-binding inhibitor of serine proteases. The inhibitor rapidly binds to the protease forming a weak enzyme-inhibitor complex, and this is followed by a slow isomerization forming a tight-binding enzyme-inhibitor complex. Active against subtilisin A with a dissociation constant of 0.18 nM. Active against perkinsin. Not active against thermolysin, papain or pepsin. This Crassostrea virginica (Eastern oyster) protein is Serine protease inhibitor Cvsi-2.